A 308-amino-acid chain; its full sequence is tRNA pseudouridine synthase B (308 aa).

Asp-49 (nucleophile) is an active-site residue.

This sequence belongs to the pseudouridine synthase TruB family. Type 1 subfamily.

The enzyme catalyses uridine(55) in tRNA = pseudouridine(55) in tRNA. In terms of biological role, responsible for synthesis of pseudouridine from uracil-55 in the psi GC loop of transfer RNAs. The chain is tRNA pseudouridine synthase B from Corynebacterium jeikeium (strain K411).